The following is a 661-amino-acid chain: Altered inheritance of mitochondria protein 3-1 (661 aa).

7 disordered regions span residues 19–99 (TKTV…YSGY), 116–142 (AQNT…SQYN), 154–194 (QPAG…TFQS), 263–419 (LPQQ…DSSS), 431–473 (RNIP…SPGI), 487–563 (YAGH…RKDN), and 615–661 (EAAT…FVHS). Over residues 37 to 58 (KDKDTHHTDHHEEDEYSEDYHT) the composition is skewed to basic and acidic residues. Over residues 120-142 (PYSSPAQQQPVSPQPPVQNSQYN) the composition is skewed to low complexity. Positions 263–318 (LPQQQQQQQQQPEYNTQLQQNQQLHNQQAYGQQQQIYSNNTQPQYVSQTQQTSYTQ) are enriched in low complexity. Polar residues-rich tracts occupy residues 319-328 (NAPPQQTRSP) and 356-371 (VNQT…NEAL). Basic and acidic residues predominate over residues 390 to 399 (THRDRGRASV). Residues 406-419 (ENMQTNNSTIDSSS) are compositionally biased toward polar residues. A compositionally biased stretch (low complexity) spans 434–447 (PAPAVGPPGAATRA). Composition is skewed to polar residues over residues 458 to 473 (SQSM…SPGI), 512 to 533 (RSTS…PSRD), and 541 to 552 (RSTVSSIQSSNR).

Belongs to the AIM3 family.

Its subcellular location is the membrane raft. The chain is Altered inheritance of mitochondria protein 3-1 (AIM3-1) from Candida glabrata (strain ATCC 2001 / BCRC 20586 / JCM 3761 / NBRC 0622 / NRRL Y-65 / CBS 138) (Yeast).